Here is a 307-residue protein sequence, read N- to C-terminus: Dihydroorotate dehydrogenase A (fumarate) (307 aa).

FMN-binding positions include S21 and K46 to T47. Substrate is bound by residues K46, N70 to L74, and N130. N130 provides a ligand contact to FMN. Catalysis depends on C133, which acts as the Nucleophile. FMN is bound by residues K168 and I194. N195 to T196 provides a ligand contact to substrate. Residues G220, G246–G247, and G268–S269 contribute to the FMN site.

It belongs to the dihydroorotate dehydrogenase family. Type 1 subfamily. As to quaternary structure, homodimer. Requires FMN as cofactor.

Its subcellular location is the cytoplasm. The enzyme catalyses (S)-dihydroorotate + fumarate = orotate + succinate. It functions in the pathway pyrimidine metabolism; UMP biosynthesis via de novo pathway. Catalyzes the conversion of dihydroorotate to orotate with fumarate as the electron acceptor. The protein is Dihydroorotate dehydrogenase A (fumarate) (pyrD) of Lactobacillus helveticus (strain DPC 4571).